The following is a 102-amino-acid chain: MALTKAELTDLLFENIGLNKREAKEIVECFYEEMRTALQNGDGVKLSGFGNFQLRTKPQRPGRNPKTGEEIPISARRVVTFHASQKLKSMVEANYRGEPNVN.

The disordered stretch occupies residues 49–71; sequence FGNFQLRTKPQRPGRNPKTGEEI.

It belongs to the bacterial histone-like protein family. In terms of assembly, heterodimer of an alpha and a beta chain.

In terms of biological role, this protein is one of the two subunits of integration host factor, a specific DNA-binding protein that functions in genetic recombination as well as in transcriptional and translational control. This chain is Integration host factor subunit alpha, found in Nitrosomonas eutropha (strain DSM 101675 / C91 / Nm57).